The sequence spans 100 residues: Urease subunit gamma (100 aa).

Belongs to the urease gamma subunit family. As to quaternary structure, probable heterotrimer of UreA (gamma), UreB (beta) and UreC (alpha) subunits. Three heterotrimers associate to form the active enzyme. The trimeric urease interacts with an accessory complex composed of UreD, UreF and UreG, which is required for the assembly of the nickel containing metallocenter of UreC. The UreE protein may also play a direct role in nickel transfer to the urease apoprotein.

The protein localises to the cytoplasm. The enzyme catalyses urea + 2 H2O + H(+) = hydrogencarbonate + 2 NH4(+). It functions in the pathway nitrogen metabolism; urea degradation; CO(2) and NH(3) from urea (urease route): step 1/1. This Proteus mirabilis (strain HI4320) protein is Urease subunit gamma.